The chain runs to 716 residues: Exocyst complex component 8 (716 aa).

S15 carries the post-translational modification Phosphoserine. The tract at residues 129–150 is disordered; sequence GFLPGPAGVPREGSGTGEEGKQ. The 101-residue stretch at 173–273 folds into the PH domain; it reads YLVYNGDLVE…WLEVLEETKR (101 aa). Residues 275–284 are compositionally biased toward basic and acidic residues; it reads LSDKRRREQE. Positions 275–319 are disordered; it reads LSDKRRREQEEAAAPRAPPPVTSKGSNPFEDEDDEELATPEAEEE. The segment covering 303–319 has biased composition (acidic residues); it reads FEDEDDEELATPEAEEE. T313 is subject to Phosphothreonine.

The protein belongs to the EXO84 family. As to quaternary structure, the exocyst complex is composed of EXOC1, EXOC2, EXOC3, EXOC4, EXOC5, EXOC6, EXOC7 and EXOC8. Interacts (via PH domain) with GTP-bound RALA and RALB. Interacts with SH3BP1; required for the localization of both SH3BP1 and the exocyst to the leading edge of migrating cells.

It is found in the cytoplasm. The protein localises to the perinuclear region. The protein resides in the cell projection. It localises to the growth cone. Its function is as follows. Component of the exocyst complex involved in the docking of exocytic vesicles with fusion sites on the plasma membrane. The polypeptide is Exocyst complex component 8 (Exoc8) (Mus musculus (Mouse)).